The primary structure comprises 842 residues: Protein translocase subunit SecA 1 (842 aa).

ATP contacts are provided by residues glutamine 85, 103–107 (GEGKT), and aspartate 493. Zn(2+) contacts are provided by cysteine 824, cysteine 826, cysteine 835, and histidine 836.

This sequence belongs to the SecA family. In terms of assembly, monomer and homodimer. Part of the essential Sec protein translocation apparatus which comprises SecA, SecYEG and auxiliary proteins SecDF. Other proteins may also be involved. Zn(2+) serves as cofactor.

It is found in the cell membrane. Its subcellular location is the cytoplasm. The catalysed reaction is ATP + H2O + cellular proteinSide 1 = ADP + phosphate + cellular proteinSide 2.. Functionally, part of the Sec protein translocase complex. Interacts with the SecYEG preprotein conducting channel. Has a central role in coupling the hydrolysis of ATP to the transfer of proteins into and across the cell membrane, serving as an ATP-driven molecular motor driving the stepwise translocation of polypeptide chains across the membrane. This Streptococcus agalactiae serotype Ia (strain ATCC 27591 / A909 / CDC SS700) protein is Protein translocase subunit SecA 1.